A 309-amino-acid chain; its full sequence is Porphobilinogen deaminase (309 aa).

Position 241 is an S-(dipyrrolylmethanemethyl)cysteine (Cys-241).

This sequence belongs to the HMBS family. Monomer. The cofactor is dipyrromethane.

It catalyses the reaction 4 porphobilinogen + H2O = hydroxymethylbilane + 4 NH4(+). It functions in the pathway porphyrin-containing compound metabolism; protoporphyrin-IX biosynthesis; coproporphyrinogen-III from 5-aminolevulinate: step 2/4. Functionally, tetrapolymerization of the monopyrrole PBG into the hydroxymethylbilane pre-uroporphyrinogen in several discrete steps. This is Porphobilinogen deaminase from Bacillus cereus (strain ATCC 10987 / NRS 248).